The sequence spans 249 residues: Methylthioribulose-1-phosphate dehydratase (249 aa).

The segment at 1-25 (MVDIKPEQTQEGNNNDHLVQSDDPE) is disordered. The segment covering 9-18 (TQEGNNNDHL) has biased composition (polar residues). Cysteine 105 is a substrate binding site. The Zn(2+) site is built by histidine 122 and histidine 124. Glutamate 151 functions as the Proton donor/acceptor in the catalytic mechanism. Histidine 207 provides a ligand contact to Zn(2+).

Belongs to the aldolase class II family. MtnB subfamily. Requires Zn(2+) as cofactor.

It is found in the cytoplasm. It catalyses the reaction 5-(methylsulfanyl)-D-ribulose 1-phosphate = 5-methylsulfanyl-2,3-dioxopentyl phosphate + H2O. It functions in the pathway amino-acid biosynthesis; L-methionine biosynthesis via salvage pathway; L-methionine from S-methyl-5-thio-alpha-D-ribose 1-phosphate: step 2/6. In terms of biological role, catalyzes the dehydration of methylthioribulose-1-phosphate (MTRu-1-P) into 2,3-diketo-5-methylthiopentyl-1-phosphate (DK-MTP-1-P). This chain is Methylthioribulose-1-phosphate dehydratase, found in Arthroderma otae (strain ATCC MYA-4605 / CBS 113480) (Microsporum canis).